Here is a 359-residue protein sequence, read N- to C-terminus: tRNA-specific 2-thiouridylase MnmA (359 aa).

ATP contacts are provided by residues 9–16 and Met35; that span reads GMSGGVDS. Cys104 (nucleophile) is an active-site residue. Cys104 and Cys200 are disulfide-bonded. Position 128 (Gly128) interacts with ATP. Positions 150-152 are interaction with tRNA; it reads KDQ. Catalysis depends on Cys200, which acts as the Cysteine persulfide intermediate. Residues 306-307 are interaction with tRNA; sequence RY.

Belongs to the MnmA/TRMU family.

The protein resides in the cytoplasm. It carries out the reaction S-sulfanyl-L-cysteinyl-[protein] + uridine(34) in tRNA + AH2 + ATP = 2-thiouridine(34) in tRNA + L-cysteinyl-[protein] + A + AMP + diphosphate + H(+). Its function is as follows. Catalyzes the 2-thiolation of uridine at the wobble position (U34) of tRNA, leading to the formation of s(2)U34. This chain is tRNA-specific 2-thiouridylase MnmA, found in Clostridium perfringens (strain ATCC 13124 / DSM 756 / JCM 1290 / NCIMB 6125 / NCTC 8237 / Type A).